A 130-amino-acid chain; its full sequence is Cyclin-dependent kinase 4 inhibitor B (130 aa).

4 ANK repeats span residues 5–34 (SSDA…DPNA), 38–66 (FGRR…EPNC), 71–100 (TLTR…RLDV), and 104–130 (WGRL…ATGD). Thr12 carries the phosphothreonine modification.

This sequence belongs to the CDKN2 cyclin-dependent kinase inhibitor family. As to quaternary structure, heterodimer of CDKN2B with CDK4 or CDK6. In terms of tissue distribution, expressed ubiquitously.

In terms of biological role, interacts strongly with CDK4 and CDK6. Potent inhibitor. Potential effector of TGF-beta induced cell cycle arrest. The chain is Cyclin-dependent kinase 4 inhibitor B (Cdkn2b) from Mus musculus (Mouse).